The primary structure comprises 215 residues: Ribosomal RNA small subunit methyltransferase G (215 aa).

S-adenosyl-L-methionine-binding residues include G71, L76, and R135.

The protein belongs to the methyltransferase superfamily. RNA methyltransferase RsmG family.

It is found in the cytoplasm. Specifically methylates the N7 position of a guanine in 16S rRNA. This Salinibacter ruber (strain DSM 13855 / M31) protein is Ribosomal RNA small subunit methyltransferase G.